The chain runs to 872 residues: G-type lectin S-receptor-like serine/threonine-protein kinase At5g24080 (872 aa).

An N-terminal signal peptide occupies residues 1 to 25 (MSSFHFYFPSVGLFSFFCFFLVSLA). The Extracellular segment spans residues 26 to 472 (TEPHIGLGSK…SRKSHGLRQK (447 aa)). The Bulb-type lectin domain occupies 30-149 (IGLGSKLKAS…EVTAGPTIWQ (120 aa)). N-linked (GlcNAc...) asparagine glycosylation is found at Asn-49, Asn-117, Asn-208, Asn-219, Asn-261, and Asn-294. Residues 306–344 (VSNPCDIAGICGNGVCNLDRTKKNADCLCLPGSVKLPDQ) form the EGF-like; atypical domain. Intrachain disulfides connect Cys-310–Cys-321 and Cys-316–Cys-332. N-linked (GlcNAc...) asparagine glycosylation is found at Asn-353, Asn-367, and Asn-390. One can recognise a PAN domain in the interval 360 to 447 (CESNINRNGS…PGSTLFVKTR (88 aa)). Intrachain disulfides connect Cys-400–Cys-424 and Cys-404–Cys-410. 2 N-linked (GlcNAc...) asparagine glycosylation sites follow: Asn-449 and Asn-459. Residues 473-493 (VLVIPIVVGMLVLVALLGMLL) traverse the membrane as a helical segment. At 494 to 872 (YYNLDRKRTL…TCSYSSMSPR (379 aa)) the chain is on the cytoplasmic side. Thr-521 is modified (phosphothreonine). The region spanning 530-810 (NNFSQLLGSG…LEGTSDEINL (281 aa)) is the Protein kinase domain. ATP contacts are provided by residues 536 to 544 (LGSGGFGTV) and Lys-558. Phosphotyrosine is present on Tyr-603. The segment at 619-637 (EQTANLLDWRTRFEIAVAT) is caM-binding. Asp-656 (proton acceptor) is an active-site residue. Phosphothreonine occurs at positions 690 and 695.

The protein belongs to the protein kinase superfamily. Ser/Thr protein kinase family.

It localises to the cell membrane. It catalyses the reaction L-seryl-[protein] + ATP = O-phospho-L-seryl-[protein] + ADP + H(+). It carries out the reaction L-threonyl-[protein] + ATP = O-phospho-L-threonyl-[protein] + ADP + H(+). The chain is G-type lectin S-receptor-like serine/threonine-protein kinase At5g24080 from Arabidopsis thaliana (Mouse-ear cress).